We begin with the raw amino-acid sequence, 316 residues long: Coiled-coil domain-containing protein 130 homolog (316 aa).

Residues 182–203 (ANSRLRAEFRQQKKEINGQQEL) adopt a coiled-coil conformation. The tract at residues 287–316 (KLEETTSSATNEKPISLVGDYSSSDNDSNG) is disordered.

It belongs to the CWC16 family.

This chain is Coiled-coil domain-containing protein 130 homolog, found in Drosophila melanogaster (Fruit fly).